Here is a 227-residue protein sequence, read N- to C-terminus: Potassium/proton antiporter CemA (227 aa).

Helical transmembrane passes span 5 to 25 (SISL…SFTF), 112 to 132 (IICF…LILI), 143 to 163 (LSDT…IGFH), and 187 to 207 (IISG…KYWI).

The protein belongs to the CemA family.

Its subcellular location is the plastid. It is found in the chloroplast inner membrane. The enzyme catalyses K(+)(in) + H(+)(out) = K(+)(out) + H(+)(in). Its function is as follows. Contributes to K(+)/H(+) antiport activity by supporting proton efflux to control proton extrusion and homeostasis in chloroplasts in a light-dependent manner to modulate photosynthesis. Prevents excessive induction of non-photochemical quenching (NPQ) under continuous-light conditions. Indirectly promotes efficient inorganic carbon uptake into chloroplasts. The polypeptide is Potassium/proton antiporter CemA (Phaseolus vulgaris (Kidney bean)).